We begin with the raw amino-acid sequence, 179 residues long: ATP synthase subunit delta (179 aa).

The protein belongs to the ATPase delta chain family. In terms of assembly, F-type ATPases have 2 components, F(1) - the catalytic core - and F(0) - the membrane proton channel. F(1) has five subunits: alpha(3), beta(3), gamma(1), delta(1), epsilon(1). F(0) has three main subunits: a(1), b(2) and c(10-14). The alpha and beta chains form an alternating ring which encloses part of the gamma chain. F(1) is attached to F(0) by a central stalk formed by the gamma and epsilon chains, while a peripheral stalk is formed by the delta and b chains.

The protein localises to the cell inner membrane. F(1)F(0) ATP synthase produces ATP from ADP in the presence of a proton or sodium gradient. F-type ATPases consist of two structural domains, F(1) containing the extramembraneous catalytic core and F(0) containing the membrane proton channel, linked together by a central stalk and a peripheral stalk. During catalysis, ATP synthesis in the catalytic domain of F(1) is coupled via a rotary mechanism of the central stalk subunits to proton translocation. In terms of biological role, this protein is part of the stalk that links CF(0) to CF(1). It either transmits conformational changes from CF(0) to CF(1) or is implicated in proton conduction. The polypeptide is ATP synthase subunit delta (Acidobacterium capsulatum (strain ATCC 51196 / DSM 11244 / BCRC 80197 / JCM 7670 / NBRC 15755 / NCIMB 13165 / 161)).